The following is a 308-amino-acid chain: Cytochrome b (308 aa).

4 consecutive transmembrane segments (helical) span residues 1–21 (FGSL…LLAM), 45–66 (WLIR…YLHI), 81–101 (WNIG…GYVL), and 146–166 (FFAL…IHLT). Residues H51 and H65 each contribute to the heme b site. The heme b site is built by H150 and H164. H169 lines the a ubiquinone pocket. Helical transmembrane passes span 194–214 (TKDA…AMFS), 256–276 (LGGV…PLLH), and 288–308 (LSQF…WIGS).

This sequence belongs to the cytochrome b family. The cytochrome bc1 complex contains 11 subunits: 3 respiratory subunits (MT-CYB, CYC1 and UQCRFS1), 2 core proteins (UQCRC1 and UQCRC2) and 6 low-molecular weight proteins (UQCRH/QCR6, UQCRB/QCR7, UQCRQ/QCR8, UQCR10/QCR9, UQCR11/QCR10 and a cleavage product of UQCRFS1). This cytochrome bc1 complex then forms a dimer. It depends on heme b as a cofactor.

It localises to the mitochondrion inner membrane. In terms of biological role, component of the ubiquinol-cytochrome c reductase complex (complex III or cytochrome b-c1 complex) that is part of the mitochondrial respiratory chain. The b-c1 complex mediates electron transfer from ubiquinol to cytochrome c. Contributes to the generation of a proton gradient across the mitochondrial membrane that is then used for ATP synthesis. The protein is Cytochrome b (MT-CYB) of Zaratornis stresemanni (White-cheeked cotinga).